A 201-amino-acid chain; its full sequence is Ribonuclease HII (201 aa).

In terms of domain architecture, RNase H type-2 spans Ala15 to Pro201. A divalent metal cation contacts are provided by Asp21, Glu22, and Asp113.

Belongs to the RNase HII family. It depends on Mn(2+) as a cofactor. Mg(2+) serves as cofactor.

It is found in the cytoplasm. It catalyses the reaction Endonucleolytic cleavage to 5'-phosphomonoester.. Its function is as follows. Endonuclease that specifically degrades the RNA of RNA-DNA hybrids. The sequence is that of Ribonuclease HII from Bordetella pertussis (strain Tohama I / ATCC BAA-589 / NCTC 13251).